The chain runs to 128 residues: MQALLFISCGAILGASLRWAIGLLFNPLFSSFAFGALIANLLGCLIIGVLLGLFWQFPQISAEWRLFLITGFLGSLTTFSSFSSEVVELFFNDKWLNGFCVLMMHLFGCLAMTVLGIWIYKICSQLLS.

4 consecutive transmembrane segments (helical) span residues 5–25 (LFIS…GLLF), 34–54 (FGAL…LGLF), 67–87 (FLIT…SEVV), and 99–119 (FCVL…GIWI). 2 residues coordinate Na(+): Gly74 and Thr77.

Belongs to the fluoride channel Fluc/FEX (TC 1.A.43) family.

It is found in the cell inner membrane. It carries out the reaction fluoride(in) = fluoride(out). Na(+) is not transported, but it plays an essential structural role and its presence is essential for fluoride channel function. Its function is as follows. Fluoride-specific ion channel. Important for reducing fluoride concentration in the cell, thus reducing its toxicity. This is Fluoride-specific ion channel FluC from Haemophilus influenzae (strain PittEE).